The following is a 440-amino-acid chain: Ribulose bisphosphate carboxylase large chain (440 aa).

Lys3 bears the N6,N6,N6-trimethyllysine mark. Substrate-binding residues include Asn112 and Thr162. Lys164 functions as the Proton acceptor in the catalytic mechanism. Substrate is bound at residue Lys166. 3 residues coordinate Mg(2+): Lys190, Asp192, and Glu193. At Lys190 the chain carries N6-carboxylysine. The active-site Proton acceptor is the His283. 3 residues coordinate substrate: Arg284, His316, and Ser368.

This sequence belongs to the RuBisCO large chain family. Type I subfamily. As to quaternary structure, heterohexadecamer of 8 large chains and 8 small chains; disulfide-linked. The disulfide link is formed within the large subunit homodimers. The cofactor is Mg(2+). The disulfide bond which can form in the large chain dimeric partners within the hexadecamer appears to be associated with oxidative stress and protein turnover.

It localises to the plastid. The protein localises to the chloroplast. It catalyses the reaction 2 (2R)-3-phosphoglycerate + 2 H(+) = D-ribulose 1,5-bisphosphate + CO2 + H2O. The catalysed reaction is D-ribulose 1,5-bisphosphate + O2 = 2-phosphoglycolate + (2R)-3-phosphoglycerate + 2 H(+). In terms of biological role, ruBisCO catalyzes two reactions: the carboxylation of D-ribulose 1,5-bisphosphate, the primary event in carbon dioxide fixation, as well as the oxidative fragmentation of the pentose substrate in the photorespiration process. Both reactions occur simultaneously and in competition at the same active site. This chain is Ribulose bisphosphate carboxylase large chain, found in Bambusa multiplex (Hedge bamboo).